A 357-amino-acid chain; its full sequence is Arginine kinase Cal b 2.0101 (357 aa).

The 83-residue stretch at 9-91 (KLEEGFKKLE…FDPIIEDYHK (83 aa)) folds into the Phosphagen kinase N-terminal domain. 64–68 (GVGVY) lines the L-arginine pocket. The region spanning 119–356 (FVISTRVRCG…LELIKIEKEM (238 aa)) is the Phosphagen kinase C-terminal domain. ATP is bound by residues 122–126 (STRVR) and histidine 185. A disulfide bond links cysteine 201 and cysteine 271. Glutamate 225 contacts L-arginine. An ATP-binding site is contributed by arginine 229. Cysteine 271 contributes to the L-arginine binding site. ATP contacts are provided by residues 280 to 284 (RASVH) and 309 to 314 (RGTRGE). Residue glutamate 314 coordinates L-arginine.

It belongs to the ATP:guanido phosphotransferase family. Expressed in chela muscle (at protein level). Expressed in muscle.

It carries out the reaction L-arginine + ATP = N(omega)-phospho-L-arginine + ADP + H(+). Its function is as follows. Catalyzes the reversible transfer of high energy ATP gamma-phosphate group to L-arginine. This is Arginine kinase Cal b 2.0101 from Callinectes bellicosus (Warrior swimming crab).